We begin with the raw amino-acid sequence, 288 residues long: Bis(5'-nucleosyl)-tetraphosphatase, symmetrical (288 aa).

This sequence belongs to the Ap4A hydrolase family.

The enzyme catalyses P(1),P(4)-bis(5'-adenosyl) tetraphosphate + H2O = 2 ADP + 2 H(+). Hydrolyzes diadenosine 5',5'''-P1,P4-tetraphosphate to yield ADP. This is Bis(5'-nucleosyl)-tetraphosphatase, symmetrical from Baumannia cicadellinicola subsp. Homalodisca coagulata.